The primary structure comprises 149 residues: MFRTMLNSKIHRATVTQADLHYVGSVTIDADLMAAADLLPGEQVTIVDINNGARLETYAISGPAGSGIIGINGAAARLVHPGDLVIIISYGIMDDAEARRHVPKVLFVDAENRIVGQGGDPAAALPGDPSSLRGDVLDPAGARGLGGGA.

S25 acts as the Schiff-base intermediate with substrate; via pyruvic acid in catalysis. S25 carries the pyruvic acid (Ser) modification. Substrate is bound at residue T57. Y58 serves as the catalytic Proton donor. Residue G73–A75 coordinates substrate. Residues G119–A149 are disordered.

Belongs to the PanD family. As to quaternary structure, heterooctamer of four alpha and four beta subunits. The cofactor is pyruvate. Post-translationally, is synthesized initially as an inactive proenzyme, which is activated by self-cleavage at a specific serine bond to produce a beta-subunit with a hydroxyl group at its C-terminus and an alpha-subunit with a pyruvoyl group at its N-terminus.

Its subcellular location is the cytoplasm. It catalyses the reaction L-aspartate + H(+) = beta-alanine + CO2. It functions in the pathway cofactor biosynthesis; (R)-pantothenate biosynthesis; beta-alanine from L-aspartate: step 1/1. Its function is as follows. Catalyzes the pyruvoyl-dependent decarboxylation of aspartate to produce beta-alanine. The sequence is that of Aspartate 1-decarboxylase from Parafrankia sp. (strain EAN1pec).